Reading from the N-terminus, the 256-residue chain is N-acetylglucosaminyldiphosphoundecaprenol N-acetyl-beta-D-mannosaminyltransferase (256 aa).

It belongs to the glycosyltransferase 26 family. TagA/TarA subfamily.

The enzyme catalyses UDP-N-acetyl-alpha-D-mannosamine + N-acetyl-alpha-D-glucosaminyl-di-trans,octa-cis-undecaprenyl diphosphate = N-acetyl-beta-D-mannosaminyl-(1-&gt;4)-N-acetyl-alpha-D-glucosaminyl di-trans,octa-cis-undecaprenyl diphosphate + UDP + H(+). The protein operates within cell wall biogenesis; poly(glycerol phosphate) teichoic acid biosynthesis. Catalyzes the conversion of GlcNAc-PP-undecaprenol into ManNAc-GlcNAc-PP-undecaprenol, the first committed lipid intermediate in the de novo synthesis of teichoic acid. In Bacillus subtilis (strain 168), this protein is N-acetylglucosaminyldiphosphoundecaprenol N-acetyl-beta-D-mannosaminyltransferase.